A 502-amino-acid polypeptide reads, in one-letter code: ATP synthase subunit alpha (502 aa).

Residues 115–138 are disordered; it reads VDGLGPIETTETRPIESPAPGVMD. 169 to 176 is a binding site for ATP; sequence GDRQTGKT.

It belongs to the ATPase alpha/beta chains family. F-type ATPases have 2 components, CF(1) - the catalytic core - and CF(0) - the membrane proton channel. CF(1) has five subunits: alpha(3), beta(3), gamma(1), delta(1), epsilon(1). CF(0) has three main subunits: a(1), b(2) and c(9-12). The alpha and beta chains form an alternating ring which encloses part of the gamma chain. CF(1) is attached to CF(0) by a central stalk formed by the gamma and epsilon chains, while a peripheral stalk is formed by the delta and b chains.

The protein resides in the cell membrane. The enzyme catalyses ATP + H2O + 4 H(+)(in) = ADP + phosphate + 5 H(+)(out). Functionally, produces ATP from ADP in the presence of a proton gradient across the membrane. The alpha chain is a regulatory subunit. The protein is ATP synthase subunit alpha of Geobacillus sp. (strain WCH70).